A 451-amino-acid polypeptide reads, in one-letter code: Ribonuclease J (451 aa).

Zn(2+)-binding residues include His-84, His-86, Asp-88, His-89, His-155, and Asp-177. 384 to 388 provides a ligand contact to substrate; the sequence is HVSGH. Residue His-410 participates in Zn(2+) binding.

Belongs to the metallo-beta-lactamase superfamily. RNA-metabolizing metallo-beta-lactamase-like family. Archaeal RNase J subfamily. In terms of assembly, homodimer. The cofactor is Zn(2+).

The protein resides in the cytoplasm. With respect to regulation, inhibited by 1,10-phenanthroline. Functionally, a highly processive 5'-3' exoribonuclease; no evidence has been seen for endonuclease activity. Prefers 5'-phosphate or 5'-hydroxyl ends; 5'-triphosphate substrates are very poorly degraded, does not degrade circular RNA. Does not degrade pre-tRNA(Trp) suggesting it is inhibited by strong secondary structures. Also degrades ssNDA but not dsDNA. The protein is Ribonuclease J of Pyrococcus abyssi (strain GE5 / Orsay).